The primary structure comprises 80 residues: Cytochrome c oxidase subunit 7A1, mitochondrial (80 aa).

Residues 1-21 (MRALRVSQALVRSFSSTARNR) constitute a mitochondrion transit peptide. The Mitochondrial matrix segment spans residues 22-46 (LENRVAEKQKIFQADNDLPVHLKGG). Residues 47 to 75 (ATDNILYRVTMTLCLGGTVYSLYCLGWAS) traverse the membrane as a helical segment. Residues 76–80 (FPHKK) are Mitochondrial intermembrane-facing.

Belongs to the cytochrome c oxidase VIIa family. In terms of assembly, component of the complex IV (CIV, cytochrome c oxidase), a multisubunit enzyme composed of 14 subunits. The complex is composed of a catalytic core of 3 subunits MT-CO1, MT-CO2 and MT-CO3, encoded in the mitochondrial DNA, and 11 supernumerary subunits COX4I1 (or COX4I2), COX5A, COX5B, COX6A2 (or COX6A1), COX6B1 (or COX6B2), COX6C, COX7A1 (or COX7A2), COX7B, COX7C, COX8B and NDUFA4, which are encoded in the nuclear genome. The complex exists as a monomer or a dimer and forms supercomplexes (SCs) in the inner mitochondrial membrane with NADH-ubiquinone oxidoreductase (complex I, CI) and ubiquinol-cytochrome c oxidoreductase (cytochrome b-c1 complex, complex III, CIII), resulting in different assemblies (supercomplex SCI(1)III(2)IV(1) and megacomplex MCI(2)III(2)IV(2)).

The protein localises to the mitochondrion inner membrane. It functions in the pathway energy metabolism; oxidative phosphorylation. Functionally, component of the mitochondrial respiratory complex IV (CIV, also named cytochrome c oxidase complex), the last enzyme in the mitochondrial electron transport chain which drives oxidative phosphorylation. The CIV complex is the component of the respiratory chain that catalyzes the reduction of oxygen to water. Acts as an assembly factor that specifically drives the homodimerization of CIV complexes, mediating the formation of mitochondrial respiratory supercomplexes (respirasomes) containing two CIV: supercomplxes with two molecules of CIV show improved activity. Despite being highly expressed in brown adipose tissue, not required for thermogenesis. The sequence is that of Cytochrome c oxidase subunit 7A1, mitochondrial (COX7A1) from Sus scrofa (Pig).